We begin with the raw amino-acid sequence, 738 residues long: YTH domain-containing protein 1 (738 aa).

Positions Met1 to Glu12 are enriched in basic and acidic residues. The tract at residues Met1–Arg341 is disordered. Ser35 bears the Phosphoserine mark. Positions Glu50–Arg59 are enriched in basic and acidic residues. The span at Ser63–Lys90 shows a compositional bias: polar residues. The span at Ser91 to Ile115 shows a compositional bias: basic and acidic residues. Lys96 is covalently cross-linked (Glycyl lysine isopeptide (Lys-Gly) (interchain with G-Cter in SUMO2)). Phosphoserine is present on residues Ser118 and Ser120. The span at Glu124 to Ala144 shows a compositional bias: basic and acidic residues. A Phosphoserine modification is found at Ser146. A Phosphothreonine modification is found at Thr148. Composition is skewed to basic and acidic residues over residues Gly151 to Ala163 and Ser170 to Thr185. Positions Gly186–Thr197 are enriched in polar residues. Residues Glu198–Glu257 show a composition bias toward acidic residues. Basic and acidic residues predominate over residues Arg258–Ala273. Over residues Phe283 to Ser292 the composition is skewed to polar residues. A phosphoserine mark is found at Ser311, Ser318, Ser320, Ser321, and Ser323. The span at Ser318 to Gly328 shows a compositional bias: low complexity. The YTH domain occupies Ala358–Phe495. Residues Lys364–Asn366 and Trp380 contribute to the RNA site. Residue Ser427 is modified to Phosphoserine. Position 431 (Trp431) interacts with RNA. At Ser438 the chain carries Phosphoserine. Asp479 serves as a coordination point for RNA. Over residues His512–Pro526 the composition is skewed to basic residues. Disordered stretches follow at residues His512–Tyr566, Gly618–Pro654, and Ala680–Arg738. Positions Ser527–Tyr566 are enriched in basic and acidic residues. Ser548 carries the phosphoserine modification. A compositionally biased stretch (basic and acidic residues) spans Arg690–Arg738.

As to quaternary structure, interacts with SRSF1. Interacts with SRSF2. Interacts with SRSF3. Interacts with SRSF7. Interacts with SRSF10. Interacts with CPSF6. Interacts with KHDRBS1/SAM68. Interacts with TRA2B. Interacts with KHDRBS3. Interacts with EMD. Interacts with RBMX. Interacts with ZCCHC8. Post-translationally, tyrosine phosphorylated. As to expression, ubiquitous.

It is found in the nucleus. Its subcellular location is the nucleus speckle. Its function is as follows. Regulator of alternative splicing that specifically recognizes and binds N6-methyladenosine (m6A)-containing RNAs. M6A is a modification present at internal sites of mRNAs and some non-coding RNAs and plays a role in the efficiency of mRNA splicing, processing and stability. Acts as a key regulator of exon-inclusion or exon-skipping during alternative splicing via interaction with mRNA splicing factors SRSF3 and SRSF10. Specifically binds m6A-containing mRNAs and promotes recruitment of SRSF3 to its mRNA-binding elements adjacent to m6A sites, leading to exon-inclusion during alternative splicing. In contrast, interaction with SRSF3 prevents interaction with SRSF10, a splicing factor that promotes exon skipping: this prevents SRSF10 from binding to its mRNA-binding sites close to m6A-containing regions, leading to inhibit exon skipping during alternative splicing. May also regulate alternative splice site selection. Also involved in nuclear export of m6A-containing mRNAs via interaction with SRSF3: interaction with SRSF3 facilitates m6A-containing mRNA-binding to both SRSF3 and NXF1, promoting mRNA nuclear export. Involved in S-adenosyl-L-methionine homeostasis by regulating expression of MAT2A transcripts, probably by binding m6A-containing MAT2A mRNAs. Also recognizes and binds m6A on other RNA molecules. Involved in random X inactivation mediated by Xist RNA: recognizes and binds m6A-containing Xist and promotes transcription repression activity of Xist. Also recognizes and binds m6A-containing single-stranded DNA. Involved in germline development: required for spermatogonial development in males and oocyte growth and maturation in females, probably via its role in alternative splicing. The polypeptide is YTH domain-containing protein 1 (Ythdc1) (Rattus norvegicus (Rat)).